The sequence spans 87 residues: Small ribosomal subunit protein uS15 (87 aa).

This sequence belongs to the universal ribosomal protein uS15 family. Part of the 30S ribosomal subunit. Forms a bridge to the 50S subunit in the 70S ribosome, contacting the 23S rRNA.

One of the primary rRNA binding proteins, it binds directly to 16S rRNA where it helps nucleate assembly of the platform of the 30S subunit by binding and bridging several RNA helices of the 16S rRNA. Its function is as follows. Forms an intersubunit bridge (bridge B4) with the 23S rRNA of the 50S subunit in the ribosome. The polypeptide is Small ribosomal subunit protein uS15 (Alkaliphilus metalliredigens (strain QYMF)).